The chain runs to 178 residues: Ribulose bisphosphate carboxylase small subunit, chloroplastic 4 (178 aa).

A chloroplast-targeting transit peptide spans 1–54; that stretch reads MASISSTVATVSRAAPAQANMVAPFTGLKSNAAFPATKKANDFSTLPSNGGRVQ.

This sequence belongs to the RuBisCO small chain family. In terms of assembly, heterohexadecamer of 8 large and 8 small subunits.

The protein resides in the plastid. It is found in the chloroplast. In terms of biological role, ruBisCO catalyzes two reactions: the carboxylation of D-ribulose 1,5-bisphosphate, the primary event in carbon dioxide fixation, as well as the oxidative fragmentation of the pentose substrate. Both reactions occur simultaneously and in competition at the same active site. Although the small subunit is not catalytic it is essential for maximal activity. This chain is Ribulose bisphosphate carboxylase small subunit, chloroplastic 4, found in Flaveria pringlei.